The chain runs to 351 residues: NAD-dependent protein deacetylase SIR2rp1 (351 aa).

Residues 10–325 enclose the Deacetylase sirtuin-type domain; the sequence is HVVGEPTFEG…RSFAQALGFG (316 aa). NAD(+) contacts are provided by residues 37 to 57 and 122 to 125; these read GAGISVAAGIPDFRSPHTGLY and QNID. Residue histidine 142 is the Proton acceptor of the active site. Zn(2+) is bound by residues cysteine 150, cysteine 153, cysteine 174, and cysteine 177. NAD(+) is bound by residues 213 to 215 and 238 to 240; these read GTS and NLE. Residues 260-284 form a disordered region; that stretch reads SSYRLSTGNGNGSKISSGDSSNSSS. Positions 265-284 are enriched in low complexity; it reads STGNGNGSKISSGDSSNSSS. NAD(+) is bound at residue cysteine 311.

This sequence belongs to the sirtuin family. Class I subfamily. It depends on Zn(2+) as a cofactor.

It is found in the nucleus. The protein localises to the chromosome. The protein resides in the telomere. The enzyme catalyses N(6)-acetyl-L-lysyl-[protein] + NAD(+) + H2O = 2''-O-acetyl-ADP-D-ribose + nicotinamide + L-lysyl-[protein]. NAD-dependent protein deacetylase, which is involved in repression of RNA polymerase I-mediated expression immediately adjacent to telomeres. It is however not involved in antigenic variation and subtelomeric variant surface glycoprotein (VSG) gene silencing. Plays a role in DNA damage response. Also has ADP-ribosylation activity in vitro. This Trypanosoma brucei brucei (strain 927/4 GUTat10.1) protein is NAD-dependent protein deacetylase SIR2rp1 (SIR2rp1).